Reading from the N-terminus, the 1029-residue chain is MDRPHSRGAPPSYSNYDEDPDELRLGPAGNPAAVRLLPASSFDEEIPETRHSRPTHRAYQPSVSSIHSRPSSISNIPSMPPPTESYVSYRETGSPTRPWTPSHVGRSSDEYRRAPPSSVHYERADLNGSPRPGTPSSRYGGSPRRPLPPAPLFAGPGARSSAFADDATVSIPLSDVDDPFGPGSADLGEARGHRGSYAAQSQVTLNEDDDEGSHLRESDIGYDEADAVDEKSAAHYGPAPAEGDQQRRGVREPQKSRKEVQLINGELVLETKIPTILYSFLPRRDADEFTHMRYTAVTCDPDDFVERGYKLRQNIGVTARETELFVCVTMYNENEYDFTRTMHAVMKNISHFCRRSKSRTWGENGWQKIVVCIVSDGREKIHPRTLDALAAMGVYQHGIAKNYVNQKAVQAHVYEYTTQVSLDADLKFKGAEKGIVPCQMLFCLKERNQRKLNSHRWFFNAFGKALNPNVCILLDVGTRPGGNSLYHLWKAFDTDSNVAGACGEIKAMKGRLGQNLLNPLVASQNFEYKMSNILDKPLESVFGYITVLPGALSAYRYHALQNDANGHGPLSQYFKGETLHGQHADVFTANMYLAEDRILCWELVAKRDERWVLKYVKGCTGETDVPDTVPEFISQRRRWLNGAFFAAIYSLVHFRQLWATDHTVARKVLLHIEFVYQLLQVLFTFFSLANFYLTFYFVAGGLADPLIDPFGNRIGLYIFTILRYTLILLICAQFILSLGNRPQGAKKPYFASMVIYGIVMVYTTFAAFYIVIRQLTDPKAKLEMGNNVFTNLIVSMASTIGLYFLMSFIYLDPWHMFTSSIQYFMLLPSYLCTLQVYAFCNTHDVTWGTKGDNVMKTDLGGAVGKGSTVELEMPSEQLDIDSGYDEALRNLRDRIEVPKSGDSEAQMQEDYYKSVRTYMVVSWMIANGILGMAVSEIYSDRTISENYYLRFILWSVASLALFRALGSTTFAIINAVNIAVEGRVRLSLKLPTWLGGSRGSKSAISSSVGSGTSIFTGLGEKITATLRRR.

3 disordered regions span residues 1-160, 174-216, and 234-257; these read MDRP…GARS, SDVD…SHLR, and AHYG…QKSR. Residues 61–77 are compositionally biased toward low complexity; the sequence is PSVSSIHSRPSSISNIP. Residues 244–257 are compositionally biased toward basic and acidic residues; the sequence is DQQRRGVREPQKSR. N-linked (GlcNAc...) asparagine glycosylation occurs at Asn-348. Transmembrane regions (helical) follow at residues 639–659, 681–701, 716–736, 752–772, 791–811, 820–840, 918–938, and 952–972; these read WLNG…QLWA, VLFT…VAGG, LYIF…QFIL, SMVI…YIVI, NLIV…FIYL, SIQY…YAFC, YMVV…SEIY, and ILWS…TFAI.

It belongs to the chitin synthase family. Class II subfamily.

It localises to the cell membrane. The enzyme catalyses [(1-&gt;4)-N-acetyl-beta-D-glucosaminyl](n) + UDP-N-acetyl-alpha-D-glucosamine = [(1-&gt;4)-N-acetyl-beta-D-glucosaminyl](n+1) + UDP + H(+). Its function is as follows. Polymerizes chitin, a structural polymer of the cell wall and septum, by transferring the sugar moiety of UDP-GlcNAc to the non-reducing end of the growing chitin polymer. Plays an important role in cell wall integrity and has distinct functions in invasive hyphae and vegetative hyphae, but is not involved in plant infection. The protein is Chitin synthase 2 of Pyricularia oryzae (strain 70-15 / ATCC MYA-4617 / FGSC 8958) (Rice blast fungus).